The primary structure comprises 330 residues: G-protein coupled bile acid receptor 1 (330 aa).

The Extracellular segment spans residues 1–19; sequence MTPNSTGEVPGPIPRGALE. The N-linked (GlcNAc...) asparagine glycan is linked to N4. Residues 20–40 traverse the membrane as a helical segment; the sequence is LSLALASLIIAANLLLALGIA. The Cytoplasmic portion of the chain corresponds to 41–50; that stretch reads CDRRLRSPPA. The helical transmembrane segment at 51 to 71 threads the bilayer; the sequence is GCFFLSLLLAGLLTGLALPTL. The Extracellular portion of the chain corresponds to 72–85; it reads PGLWRQSHRGYWSC. Cysteines 85 and 155 form a disulfide. Residues 86-106 form a helical membrane-spanning segment; sequence LLVYLAPNFSFLSLLANLLLV. Residues 107–125 are Cytoplasmic-facing; it reads HGERYVAVLRPLQPPGSIR. A helical transmembrane segment spans residues 126 to 146; it reads LALLLTWTGPLLFASLPALGW. Residues 147–169 lie on the Extracellular side of the membrane; that stretch reads NHWGPEANCSSQTIFPAPYLYLE. A glycan (N-linked (GlcNAc...) asparagine) is linked at N154. A helical membrane pass occupies residues 170–190; sequence VYGLLLPAVGAAALLSAHVLL. Residues 191-230 are Cytoplasmic-facing; that stretch reads AAHRQLQDIRRLERAVCRDAPSALARALTWRQARAQAGAT. The chain crosses the membrane as a helical span at residues 231–251; sequence LLFGLCWGPYVATLFLSVLAY. The Extracellular portion of the chain corresponds to 252-261; sequence EQRPPLGPGT. Residues 262–282 traverse the membrane as a helical segment; it reads LLSLLSLGSASAAAVPVAMGL. The Cytoplasmic portion of the chain corresponds to 283 to 330; that stretch reads GDHRYTAPWRAAARRWLRGLRGRGSQASPGPSTAYHTSSQSSVDVDLN. The tract at residues 304-330 is disordered; that stretch reads GRGSQASPGPSTAYHTSSQSSVDVDLN. The segment covering 307–330 has biased composition (polar residues); it reads SQASPGPSTAYHTSSQSSVDVDLN.

This sequence belongs to the G-protein coupled receptor 1 family. As to expression, expressed at high level in spleen. Expressed at lower level in thymus, heart, lung, liver, kidney, ileum, blood and adherent alveolar macrophage cells.

The protein localises to the cell membrane. Receptor for bile acid. Bile-acid binding induces its internalization, activation of extracellular signal-regulated kinase and intracellular cAMP production. May be involved in the suppression of macrophage functions by bile acids. Involved in bile acid promoted GLP1R secretion. This Oryctolagus cuniculus (Rabbit) protein is G-protein coupled bile acid receptor 1 (GPBAR1).